The chain runs to 122 residues: Ferredoxin (122 aa).

Positions 1–33 (MSHDRRLTVGSLLPNQPRPVAVPKAPSVVQPSK) are disordered. The segment at 8–14 (TVGSLLP) is targeting peptide. One can recognise a 2Fe-2S ferredoxin-type domain in the interval 40-122 (AIIRLEQNGR…FRLACQANME (83 aa)). Positions 75, 80, 83, and 117 each coordinate [2Fe-2S] cluster.

Belongs to the 2Fe2S plant-type ferredoxin family. [2Fe-2S] cluster is required as a cofactor.

Its subcellular location is the encapsulin nanocompartment. Functionally, cargo protein of a type 1 encapsulin nanocompartment. An iron-binding protein probably involved in iron mineralization in the encapsulin nanocompartment. 2 different cargo proteins have been identified (IMEF and Fer); when both are expressed in E.coli with the shell protein only IMEF is detected within the nanocompartment. E.coli expressing all 3 genes stores the largest amount of iron and is protected from Fe/H2O2-induced oxidative stress. The protein is Ferredoxin of Bacillus thermotolerans (Quasibacillus thermotolerans).